Consider the following 95-residue polypeptide: DNA-directed RNA polymerase subunit Rpo11 (95 aa).

Belongs to the archaeal Rpo11/eukaryotic RPB11/RPC19 RNA polymerase subunit family. In terms of assembly, part of the RNA polymerase complex.

The protein resides in the cytoplasm. The enzyme catalyses RNA(n) + a ribonucleoside 5'-triphosphate = RNA(n+1) + diphosphate. Functionally, DNA-dependent RNA polymerase (RNAP) catalyzes the transcription of DNA into RNA using the four ribonucleoside triphosphates as substrates. In Thermococcus sibiricus (strain DSM 12597 / MM 739), this protein is DNA-directed RNA polymerase subunit Rpo11.